Reading from the N-terminus, the 194-residue chain is Peptidyl-tRNA hydrolase (194 aa).

A tRNA-binding site is contributed by Tyr17. The active-site Proton acceptor is His22. 3 residues coordinate tRNA: Tyr68, Asn70, and Asn116.

Belongs to the PTH family. In terms of assembly, monomer.

The protein localises to the cytoplasm. It carries out the reaction an N-acyl-L-alpha-aminoacyl-tRNA + H2O = an N-acyl-L-amino acid + a tRNA + H(+). Its function is as follows. Hydrolyzes ribosome-free peptidyl-tRNAs (with 1 or more amino acids incorporated), which drop off the ribosome during protein synthesis, or as a result of ribosome stalling. Functionally, catalyzes the release of premature peptidyl moieties from peptidyl-tRNA molecules trapped in stalled 50S ribosomal subunits, and thus maintains levels of free tRNAs and 50S ribosomes. The polypeptide is Peptidyl-tRNA hydrolase (Pseudomonas syringae pv. tomato (strain ATCC BAA-871 / DC3000)).